Here is a 153-residue protein sequence, read N- to C-terminus: Ribosome maturation factor RimP (153 aa).

This sequence belongs to the RimP family.

It is found in the cytoplasm. Required for maturation of 30S ribosomal subunits. The chain is Ribosome maturation factor RimP from Clostridium botulinum (strain 657 / Type Ba4).